We begin with the raw amino-acid sequence, 229 residues long: 2,3-bisphosphoglycerate-dependent phosphoglycerate mutase 2 (229 aa).

Substrate contacts are provided by residues 8-15 (RHGQSEWN), 21-22 (TG), Arg60, 87-90 (ERHY), Lys98, 114-115 (RR), and 183-184 (GN). Catalysis depends on His9, which acts as the Tele-phosphohistidine intermediate. Glu87 serves as the catalytic Proton donor/acceptor.

Belongs to the phosphoglycerate mutase family. BPG-dependent PGAM subfamily.

The enzyme catalyses (2R)-2-phosphoglycerate = (2R)-3-phosphoglycerate. The protein operates within carbohydrate degradation; glycolysis; pyruvate from D-glyceraldehyde 3-phosphate: step 3/5. Functionally, catalyzes the interconversion of 2-phosphoglycerate and 3-phosphoglycerate. This Latilactobacillus sakei subsp. sakei (strain 23K) (Lactobacillus sakei subsp. sakei) protein is 2,3-bisphosphoglycerate-dependent phosphoglycerate mutase 2.